The chain runs to 82 residues: UPF0213 protein SSP2268 (82 aa).

Residues 2–77 (DKHYIYIVKC…KTFSRQKKLK (76 aa)) form the GIY-YIG domain.

The protein belongs to the UPF0213 family.

The chain is UPF0213 protein SSP2268 from Staphylococcus saprophyticus subsp. saprophyticus (strain ATCC 15305 / DSM 20229 / NCIMB 8711 / NCTC 7292 / S-41).